A 123-amino-acid polypeptide reads, in one-letter code: Large ribosomal subunit protein uL14 (123 aa).

The protein belongs to the universal ribosomal protein uL14 family. Part of the 50S ribosomal subunit. Forms a cluster with proteins L3 and L19. In the 70S ribosome, L14 and L19 interact and together make contacts with the 16S rRNA in bridges B5 and B8.

Functionally, binds to 23S rRNA. Forms part of two intersubunit bridges in the 70S ribosome. The polypeptide is Large ribosomal subunit protein uL14 (Yersinia pestis bv. Antiqua (strain Antiqua)).